The primary structure comprises 95 residues: Co-chaperonin GroES (95 aa).

Belongs to the GroES chaperonin family. Heptamer of 7 subunits arranged in a ring. Interacts with the chaperonin GroEL.

It localises to the cytoplasm. Functionally, together with the chaperonin GroEL, plays an essential role in assisting protein folding. The GroEL-GroES system forms a nano-cage that allows encapsulation of the non-native substrate proteins and provides a physical environment optimized to promote and accelerate protein folding. GroES binds to the apical surface of the GroEL ring, thereby capping the opening of the GroEL channel. The chain is Co-chaperonin GroES from Rickettsia prowazekii (strain Madrid E).